Here is a 348-residue protein sequence, read N- to C-terminus: Nuclear receptor subfamily 1 group I member 3 (348 aa).

Residues Pro-8–Ser-83 constitute a DNA-binding region (nuclear receptor). The NR C4-type zinc finger occupies Cys-11 to Cys-31. Thr-38 is subject to Phosphothreonine; by PKC. An NR C4-type zinc finger spans residues Cys-47–Cys-71. The 240-residue stretch at Gly-109–Ser-348 folds into the NR LBD domain.

This sequence belongs to the nuclear hormone receptor family. NR1 subfamily. As to quaternary structure, heterodimer of NR1I3 and RXR. Interacts with PSMC4. Interacts with ECT2. Directly interacts with DNAJC7; this complex may also include HSP90. Interacts with CRY1. Interacts with CRY2 in a ligand-dependent manner. In terms of processing, phosphorylated at Thr-38 by PKC, dephosphorylation of Thr-38 is required for nuclear translocation and activation.

It localises to the nucleus. It is found in the cytoplasm. The protein resides in the cytoskeleton. In terms of biological role, binds and transactivates the retinoic acid response elements that control expression of the retinoic acid receptor beta 2 and alcohol dehydrogenase 3 genes. Transactivates both the phenobarbital responsive element module of the human CYP2B6 gene and the CYP3A4 xenobiotic response element. The polypeptide is Nuclear receptor subfamily 1 group I member 3 (NR1I3) (Callorhinus ursinus (Northern fur seal)).